Reading from the N-terminus, the 373-residue chain is Queuine tRNA-ribosyltransferase (373 aa).

The active-site Proton acceptor is aspartate 94. Residues 94-98 (DSGGF), aspartate 148, glutamine 191, and glycine 218 each bind substrate. The interval 249–255 (GVGTPDY) is RNA binding. Catalysis depends on aspartate 268, which acts as the Nucleophile. Residues 273 to 277 (TRIGR) form an RNA binding; important for wobble base 34 recognition region. The Zn(2+) site is built by cysteine 306, cysteine 308, cysteine 311, and histidine 337.

It belongs to the queuine tRNA-ribosyltransferase family. Homodimer. Within each dimer, one monomer is responsible for RNA recognition and catalysis, while the other monomer binds to the replacement base PreQ1. Zn(2+) is required as a cofactor.

The enzyme catalyses 7-aminomethyl-7-carbaguanine + guanosine(34) in tRNA = 7-aminomethyl-7-carbaguanosine(34) in tRNA + guanine. Its pathway is tRNA modification; tRNA-queuosine biosynthesis. Catalyzes the base-exchange of a guanine (G) residue with the queuine precursor 7-aminomethyl-7-deazaguanine (PreQ1) at position 34 (anticodon wobble position) in tRNAs with GU(N) anticodons (tRNA-Asp, -Asn, -His and -Tyr). Catalysis occurs through a double-displacement mechanism. The nucleophile active site attacks the C1' of nucleotide 34 to detach the guanine base from the RNA, forming a covalent enzyme-RNA intermediate. The proton acceptor active site deprotonates the incoming PreQ1, allowing a nucleophilic attack on the C1' of the ribose to form the product. After dissociation, two additional enzymatic reactions on the tRNA convert PreQ1 to queuine (Q), resulting in the hypermodified nucleoside queuosine (7-(((4,5-cis-dihydroxy-2-cyclopenten-1-yl)amino)methyl)-7-deazaguanosine). This is Queuine tRNA-ribosyltransferase from Ruminiclostridium cellulolyticum (strain ATCC 35319 / DSM 5812 / JCM 6584 / H10) (Clostridium cellulolyticum).